The following is an 81-amino-acid chain: Large ribosomal subunit protein bL27 (81 aa).

A compositionally biased stretch (polar residues) spans 1–11 (MATSKSGGSSK). The interval 1–23 (MATSKSGGSSKNGRDSISKRLGV) is disordered.

This sequence belongs to the bacterial ribosomal protein bL27 family.

The sequence is that of Large ribosomal subunit protein bL27 from Borrelia garinii subsp. bavariensis (strain ATCC BAA-2496 / DSM 23469 / PBi) (Borreliella bavariensis).